A 149-amino-acid polypeptide reads, in one-letter code: D-aminoacyl-tRNA deacylase (149 aa).

The Gly-cisPro motif, important for rejection of L-amino acids signature appears at 137 to 138 (GP).

The protein belongs to the DTD family. Homodimer.

It localises to the cytoplasm. It carries out the reaction glycyl-tRNA(Ala) + H2O = tRNA(Ala) + glycine + H(+). The enzyme catalyses a D-aminoacyl-tRNA + H2O = a tRNA + a D-alpha-amino acid + H(+). Its function is as follows. An aminoacyl-tRNA editing enzyme that deacylates mischarged D-aminoacyl-tRNAs. Also deacylates mischarged glycyl-tRNA(Ala), protecting cells against glycine mischarging by AlaRS. Acts via tRNA-based rather than protein-based catalysis; rejects L-amino acids rather than detecting D-amino acids in the active site. By recycling D-aminoacyl-tRNA to D-amino acids and free tRNA molecules, this enzyme counteracts the toxicity associated with the formation of D-aminoacyl-tRNA entities in vivo and helps enforce protein L-homochirality. The protein is D-aminoacyl-tRNA deacylase of Clostridium novyi (strain NT).